We begin with the raw amino-acid sequence, 507 residues long: DNA nucleotidylexotransferase (507 aa).

The short motif at Pro-11–Lys-17 is the Nuclear localization signal element. A BRCT domain is found at Gln-27–Leu-124. Positions Val-254–Thr-258 are involved in DNA binding. A 2'-deoxyribonucleoside 5'-triphosphate contacts are provided by residues Gly-329 to Lys-334 and His-338 to Asp-341. Mg(2+) is bound by residues Asp-339, Asp-341, and Asp-431. Residue Gly-446–Trp-447 participates in a 2'-deoxyribonucleoside 5'-triphosphate binding.

It belongs to the DNA polymerase type-X family. Mg(2+) is required as a cofactor. As to expression, found in the thymus and not in the spleen, kidney, intestine, or liver.

The protein localises to the nucleus. It catalyses the reaction DNA(n) + a 2'-deoxyribonucleoside 5'-triphosphate = DNA(n+1) + diphosphate. Its function is as follows. Template-independent DNA polymerase which catalyzes the random addition of deoxynucleoside 5'-triphosphate to the 3'-end of a DNA initiator. One of the in vivo functions of this enzyme is the addition of nucleotides at the junction (N region) of rearranged Ig heavy chain and T-cell receptor gene segments during the maturation of B- and T-cells. The chain is DNA nucleotidylexotransferase (dntt) from Xenopus laevis (African clawed frog).